An 860-amino-acid polypeptide reads, in one-letter code: LPS-assembly protein LptD (860 aa).

The first 21 residues, 1–21, serve as a signal peptide directing secretion; the sequence is MTKRYFSLLAVCSAIATSTFA.

It belongs to the LptD family. Component of the lipopolysaccharide transport and assembly complex. Interacts with LptE and LptA.

It localises to the cell outer membrane. Its function is as follows. Together with LptE, is involved in the assembly of lipopolysaccharide (LPS) at the surface of the outer membrane. In Saccharophagus degradans (strain 2-40 / ATCC 43961 / DSM 17024), this protein is LPS-assembly protein LptD.